The primary structure comprises 402 residues: Mitochondrial inner membrane protein OXA1 (402 aa).

The transit peptide at 1–42 directs the protein to the mitochondrion; sequence MFKLTSRLVTSRFAASSRLATARTIVLPRPHPSWISFQAKRF. The Mitochondrial intermembrane portion of the chain corresponds to 43-118; sequence NSTGPNANDV…PSDIIQHVLE (76 aa). Residues 119-139 form a helical membrane-spanning segment; the sequence is AVHVYSGLPWWGTIAATTILI. The Mitochondrial matrix segment spans residues 140–199; sequence RCLMFPLYVKSSDTVARNSHIKPELDALNNKLMSTTDLQQGQLVAMQRKKLLSSHGIKNR. A helical membrane pass occupies residues 200-220; the sequence is WLAAPMLQIPIALGFFNALRH. The Mitochondrial intermembrane portion of the chain corresponds to 221 to 239; the sequence is MANYPVDGFANQGVAWFTD. Residues 240 to 260 traverse the membrane as a helical segment; that stretch reads LTQADPYLGLQVITAAVFISF. The Mitochondrial matrix segment spans residues 261-275; sequence TRLGGETGAQQFSSP. The chain crosses the membrane as a helical span at residues 276 to 292; the sequence is MKRLFTILPIISIPATM. The Mitochondrial intermembrane portion of the chain corresponds to 293–297; that stretch reads NLSSA. The chain crosses the membrane as a helical span at residues 298–316; sequence VVLYFAFNGAFSVLQTMIL. The Mitochondrial matrix segment spans residues 317-402; the sequence is RNKWVRSKLK…HKSNFINNKK (86 aa). Over residues 366–385 the composition is skewed to basic and acidic residues; sequence RQLMQDNEKKLQESFKEKRQ. The segment at 366-386 is disordered; the sequence is RQLMQDNEKKLQESFKEKRQN.

It belongs to the OXA1/ALB3/YidC family. As to quaternary structure, interacts with the large ribosome subunit of mitochondrial ribosome. Interacts directly with MRP20. Interacts with OXA1.

It is found in the mitochondrion inner membrane. Mitochondrial inner membrane insertase that mediates the insertion of both mitochondrion-encoded precursors and nuclear-encoded proteins from the matrix into the inner membrane. Links mitoribosomes with the inner membrane. Forms pores capable of accommodating translocating protein segments. Essential for the activity and assembly of cytochrome c oxidase. Plays a central role in the translocation and export of the N-terminal part of the COX2 protein into the mitochondrial intermembrane space. This Saccharomyces cerevisiae (strain ATCC 204508 / S288c) (Baker's yeast) protein is Mitochondrial inner membrane protein OXA1.